The chain runs to 159 residues: Keratin-associated protein 6-2 (159 aa).

Positions 11–147 (GYGCGYGSGY…SYYRSGCCGY (137 aa)) are 66 X 2 AA repeats of G-[YCGS].

This sequence belongs to the KRTAP type 6 family. As to quaternary structure, interacts with hair keratins. Expressed in skin during two hair growth cycles. Expression restricted to the cortical cells of hair follicles, appearing first in the cortical cells processing the flat nuclei located a few cells above the dermal papilla.

Functionally, in the hair cortex, hair keratin intermediate filaments are embedded in an interfilamentous matrix, consisting of hair keratin-associated proteins (KRTAP), which are essential for the formation of a rigid and resistant hair shaft through their extensive disulfide bond cross-linking with abundant cysteine residues of hair keratins. The matrix proteins include the high-sulfur and high-glycine-tyrosine keratins. The polypeptide is Keratin-associated protein 6-2 (Mus musculus (Mouse)).